The following is a 213-amino-acid chain: MASFATHLVVVVTMLFVAMASAEMLQDVCVADLSNAVKVNGYTCKDSTQITPEDFYFKGLANIAATNTSTGSVVTGANVEKLPGLNTLGLSMSRIDYAPNGLNPPHVHPRASEIIFVLEGQLYVGFVTTAGKLIAKNLNKGDVFTFPKGLIHFQKNIANSPASVLAAFDSQLPGTQSLVASLFGALPDDILAKSFQLKHKQVKKIKLRYAPKK.

The N-terminal stretch at Met-1–Ala-22 is a signal peptide. Cys-29 and Cys-44 are disulfide-bonded. The region spanning Lys-58–Lys-203 is the Cupin type-1 domain. Asn-67 carries N-linked (GlcNAc...) asparagine glycosylation. Residues His-106, His-108, Glu-113, and His-152 each coordinate Mn(2+).

It belongs to the germin family. As to quaternary structure, oligomer (believed to be a pentamer but probably hexamer).

Its subcellular location is the secreted. The protein resides in the extracellular space. It localises to the apoplast. May play a role in plant defense. Probably has no oxalate oxidase activity even if the active site is conserved. This is Probable germin-like protein subfamily 2 member 5 from Arabidopsis thaliana (Mouse-ear cress).